The chain runs to 364 residues: Poly(3-hydroxyalkanoate) polymerase subunit PhaE (364 aa).

Residues 322–364 (SGKTPTTALKAPAPATKATEKPATRATTRRKTAAKPTGGTADD) are disordered. Low complexity predominate over residues 324-338 (KTPTTALKAPAPATK).

It belongs to the PHA/PHB synthase family. Type III PhaE subfamily. Forms a heterodimer with PhaC, which may multimerize in the presence of 3-hydroxybutyryl-CoA.

The protein localises to the cytoplasm. It participates in biopolymer metabolism; poly-(R)-3-hydroxybutanoate biosynthesis. In terms of biological role, polymerizes D(-)-3-hydroxybutyryl-CoA to create polyhydroxybutyrate (PHB) which consists of thousands of hydroxybutyrate molecules linked end to end. This subunit has no catalytic activity but enhances the activity of PhaC, the catalytic subunit. In Thiocystis violacea, this protein is Poly(3-hydroxyalkanoate) polymerase subunit PhaE.